The primary structure comprises 144 residues: Transcriptional regulator MraZ (144 aa).

2 SpoVT-AbrB domains span residues 4–47 (EYKN…TADK) and 77–120 (AQEI…DLKQ).

This sequence belongs to the MraZ family. Forms oligomers.

It localises to the cytoplasm. The protein resides in the nucleoid. This is Transcriptional regulator MraZ from Treponema denticola (strain ATCC 35405 / DSM 14222 / CIP 103919 / JCM 8153 / KCTC 15104).